We begin with the raw amino-acid sequence, 146 residues long: Large ribosomal subunit protein uL15 (146 aa).

A compositionally biased stretch (basic and acidic residues) spans 1-13; sequence MKLHELKPAEGSR. The tract at residues 1-52 is disordered; that stretch reads MKLHELKPAEGSRKVRNRVGRGIGSGNGKTAGKGHKGQNARSGGGVRLGFEG. Composition is skewed to gly residues over residues 21-31 and 42-52; these read RGIGSGNGKTA and SGGGVRLGFEG.

This sequence belongs to the universal ribosomal protein uL15 family. Part of the 50S ribosomal subunit.

Its function is as follows. Binds to the 23S rRNA. The protein is Large ribosomal subunit protein uL15 of Bacillus anthracis (strain A0248).